The primary structure comprises 876 residues: Alanine--tRNA ligase (876 aa).

Zn(2+) is bound by residues H564, H568, C666, and H670.

This sequence belongs to the class-II aminoacyl-tRNA synthetase family. As to quaternary structure, homotetramer. The cofactor is Zn(2+).

It is found in the cytoplasm. The enzyme catalyses tRNA(Ala) + L-alanine + ATP = L-alanyl-tRNA(Ala) + AMP + diphosphate. Catalyzes the attachment of alanine to tRNA(Ala) in a two-step reaction: alanine is first activated by ATP to form Ala-AMP and then transferred to the acceptor end of tRNA(Ala). Also edits incorrectly charged Ser-tRNA(Ala) and Gly-tRNA(Ala) via its editing domain. The protein is Alanine--tRNA ligase of Salmonella typhimurium (strain LT2 / SGSC1412 / ATCC 700720).